The sequence spans 156 residues: Small ribosomal subunit protein uS7 (156 aa).

Belongs to the universal ribosomal protein uS7 family. Part of the 30S ribosomal subunit. Contacts proteins S9 and S11.

Its function is as follows. One of the primary rRNA binding proteins, it binds directly to 16S rRNA where it nucleates assembly of the head domain of the 30S subunit. Is located at the subunit interface close to the decoding center, probably blocks exit of the E-site tRNA. This chain is Small ribosomal subunit protein uS7, found in Solidesulfovibrio magneticus (strain ATCC 700980 / DSM 13731 / RS-1) (Desulfovibrio magneticus).